A 122-amino-acid polypeptide reads, in one-letter code: Serum amyloid A-1 protein (122 aa).

Positions 1–19 (MKLLTSLVFCSLLLGVCHG) are cleaved as a signal peptide. Residues 20 to 45 (GFFSFVHEAFQGAGDMWRAYTDMKEA) are important for amyloid formation. Residues 91–108 (HEDTIADQEANRHGRSGK) are compositionally biased toward basic and acidic residues. A disordered region spans residues 91–122 (HEDTIADQEANRHGRSGKDPNYYRPPGLPDKY).

It belongs to the SAA family. In terms of assembly, homohexamer; dimer of trimers. Can form amyloid fibrils after partial proteolysis; the native, undenatured protein does not form amyloid fibrils (in vitro). Apolipoprotein of the HDL complex. Binds to heparin. As to expression, detected in blood plasma (at protein level). Detected in liver.

It localises to the secreted. Major acute phase protein. The sequence is that of Serum amyloid A-1 protein (Saa1) from Mus musculus (Mouse).